Consider the following 401-residue polypeptide: 3-oxoadipyl-CoA/3-oxo-5,6-dehydrosuberyl-CoA thiolase (401 aa).

C90 serves as the catalytic Acyl-thioester intermediate. Active-site proton acceptor residues include H357 and C387.

It belongs to the thiolase-like superfamily. Thiolase family.

The catalysed reaction is succinyl-CoA + acetyl-CoA = 3-oxoadipyl-CoA + CoA. It carries out the reaction 2,3-didehydroadipoyl-CoA + acetyl-CoA = 3-oxo-5,6-didehydrosuberyl-CoA + CoA. It functions in the pathway aromatic compound metabolism; phenylacetate degradation. Catalyzes the thiolytic cleavage of the beta-keto C8 intermediate 3-oxo-5,6-dehydrosuberyl-CoA with CoA to yield the C6 intermediate 2,3-dehydroadipyl-CoA and acetyl-CoA. Besides it catalyzes also the last step of the pathway, in which 3-oxoadipyl-CoA similarly is cleaved to acetyl-CoA and succinyl-CoA. The sequence is that of 3-oxoadipyl-CoA/3-oxo-5,6-dehydrosuberyl-CoA thiolase (paaJ) from Escherichia coli (strain K12).